A 183-amino-acid chain; its full sequence is Probable actin-related protein 2/3 complex subunit 3 (183 aa).

Belongs to the ARPC3 family. As to quaternary structure, component of the Arp2/3 complex.

It localises to the cytoplasm. Its subcellular location is the cytoskeleton. In terms of biological role, functions as a component of the Arp2/3 complex which is involved in regulation of actin polymerization and together with an activating nucleation-promoting factor (NPF) mediates the formation of branched actin networks. The polypeptide is Probable actin-related protein 2/3 complex subunit 3 (arx-5) (Caenorhabditis elegans).